An 859-amino-acid chain; its full sequence is Leucine--tRNA ligase (859 aa).

Residues Pro-43–His-53 carry the 'HIGH' region motif. A 'KMSKS' region motif is present at residues Lys-614–Ser-618. An ATP-binding site is contributed by Lys-617.

Belongs to the class-I aminoacyl-tRNA synthetase family.

It localises to the cytoplasm. It catalyses the reaction tRNA(Leu) + L-leucine + ATP = L-leucyl-tRNA(Leu) + AMP + diphosphate. The polypeptide is Leucine--tRNA ligase (Magnetococcus marinus (strain ATCC BAA-1437 / JCM 17883 / MC-1)).